A 666-amino-acid polypeptide reads, in one-letter code: Envelope glycoprotein (666 aa).

The first 33 residues, 1–33 (MDRPALPKSIKDKTNPWGPIILGILIMLGGALG), serve as a signal peptide directing secretion. Residues 31 to 264 (ALGKGSPHKV…KISDLGPRVP (234 aa)) are receptor-binding domain (RBD). At 34-607 (KGSPHKVFNL…FNRSPWLTTL (574 aa)) the chain is on the extracellular side. N42 carries N-linked (GlcNAc...) asparagine; by host glycosylation. Intrachain disulfides connect C76–C127, C102–C116, C103–C112, C150–C170, and C162–C175. D115 provides a ligand contact to Zn(2+). The N-linked (GlcNAc...) asparagine; by host glycan is linked to N197. The cysteines at positions 207 and 213 are disulfide-linked. Residues 265-310 (IGPNPVLSEQRPPSQPEPARLPPSSNLTQGGTPSAPTGPPQEGTGD) are disordered. Over residues 287-299 (PSSNLTQGGTPSA) the composition is skewed to polar residues. N-linked (GlcNAc...) asparagine; by host glycans are attached at residues N290 and N324. Disulfide bonds link C334-C337, C334-C560, C364-C417, C424-C437, and C552-C560. The CXXC motif lies at 334–337 (CWLC). 2 N-linked (GlcNAc...) asparagine; by host glycosylation sites follow: N356 and N363. Residues 378–399 (TGKPLPRKGSQDPPGPVQYHSG) are disordered. The N-linked (GlcNAc...) asparagine; by host glycan is linked to N431. Residues 469–489 (VSLTLALLLGGLTMGGIAAGV) are fusion peptide. The stretch at 500 to 534 (QQFEQLHAAIQADLKEVESSITNLEKSLTSLSEVV) forms a coiled coil. Residues 535-551 (LQNRRGLDLLFLEKGGL) form an immunosuppression region. The CX6CC motif lies at 552–560 (CAALKEECC). A helical transmembrane segment spans residues 608–628 (ISTIMGPLIILLLILMFGPCI). A lipid anchor (S-palmitoyl cysteine; by host) is attached at C627. Residues 629-666 (LNRLVQFVKDRISVVQALVLTQQYHQLKPLEHGRAIVK) are Cytoplasmic-facing. The YXXL motif; contains endocytosis signal signature appears at 652 to 655 (YHQL).

As to quaternary structure, the mature envelope protein (Env) consists of a trimer of SU-TM heterodimers attached by a labile interchain disulfide bond. In terms of processing, specific enzymatic cleavages in vivo yield mature proteins. Envelope glycoproteins are synthesized as an inactive precursor that is N-glycosylated and processed likely by host cell furin or by a furin-like protease in the Golgi to yield the mature SU and TM proteins. The cleavage site between SU and TM requires the minimal sequence [KR]-X-[KR]-R. The R-peptide is released from the C-terminus of the cytoplasmic tail of the TM protein upon particle formation as a result of proteolytic cleavage by the viral protease. Cleavage of this peptide is required for TM to become fusogenic. Post-translationally, the CXXC motif is highly conserved across a broad range of retroviral envelope proteins. It is thought to participate in the formation of a labile disulfide bond possibly with the CX6CC motif present in the transmembrane protein. Isomerization of the intersubunit disulfide bond to an SU intrachain disulfide bond is thought to occur upon receptor recognition in order to allow membrane fusion. The transmembrane protein is palmitoylated. In terms of processing, the R-peptide is palmitoylated.

It localises to the virion membrane. The protein resides in the host cell membrane. In terms of biological role, the surface protein (SU) attaches the virus to the host cell by binding to its receptor. This interaction triggers the refolding of the transmembrane protein (TM) and is thought to activate its fusogenic potential by unmasking its fusion peptide. Fusion occurs at the host cell plasma membrane. Its function is as follows. The transmembrane protein (TM) acts as a class I viral fusion protein. Under the current model, the protein has at least 3 conformational states: pre-fusion native state, pre-hairpin intermediate state, and post-fusion hairpin state. During viral and target cell membrane fusion, the coiled coil regions (heptad repeats) assume a trimer-of-hairpins structure, positioning the fusion peptide in close proximity to the C-terminal region of the ectodomain. The formation of this structure appears to drive apposition and subsequent fusion of viral and target cell membranes. Membranes fusion leads to delivery of the nucleocapsid into the cytoplasm. This chain is Envelope glycoprotein (env), found in Hortulanus murine leukemia virus (HoMuLV).